A 327-amino-acid chain; its full sequence is RNA ligase 1 (327 aa).

The cofactor is Mg(2+). Mn(2+) serves as cofactor. AMPylates itself (auto-AMPylation).

The catalysed reaction is ATP + (ribonucleotide)n-3'-hydroxyl + 5'-phospho-(ribonucleotide)m = (ribonucleotide)n+m + AMP + diphosphate.. Functions as an RNA ligase, in vitro. The ligation reaction entails three nucleotidyl transfer steps. In the first step, the RNA ligase reacts with ATP in the absence of nucleic acid to form a covalent ligase-AMP intermediate and release pyrophosphate. In step 2, the ligase-AMP binds to the nucleic acid and transfers the adenylate to the 5'-PO4 terminus to form an adenylylated intermediate. In step 3, the RNA ligase directs the attack of the 3'-OH on the 5'-phosphoanhydride linkage, resulting in a repaired 3'-5' phosphodiester and release of AMP. Exhibits selectivity for single-stranded RNA substrates and may not have nick-sealing activity on double-stranded DNA-RNA hybrids. May play a role in maintaining RNA integrity under stress conditions, for example in response to reactive oxygen species (ROS). This is RNA ligase 1 from Mus musculus (Mouse).